A 165-amino-acid polypeptide reads, in one-letter code: Inorganic pyrophosphatase (165 aa).

Substrate contacts are provided by Lys-21, Arg-35, and Tyr-47. Positions 57, 62, and 94 each coordinate Mg(2+). A substrate-binding site is contributed by Tyr-131.

Belongs to the PPase family. As to quaternary structure, homohexamer. Requires Mg(2+) as cofactor.

The protein resides in the cytoplasm. It carries out the reaction diphosphate + H2O = 2 phosphate + H(+). Functionally, catalyzes the hydrolysis of inorganic pyrophosphate (PPi) forming two phosphate ions. The protein is Inorganic pyrophosphatase of Geobacillus stearothermophilus (Bacillus stearothermophilus).